A 275-amino-acid polypeptide reads, in one-letter code: Fructose permease IID component (275 aa).

The PTS EIID domain maps to 5-274; that stretch reads KRLTKKEIFS…GILGYWAGFL (270 aa). A run of 5 helical transmembrane segments spans residues 100–120, 127–147, 187–207, 227–247, and 255–275; these read MKIG…WGTI, LGAS…FFLL, ILGL…NIPI, VLDS…VAWM, and LLII…GFLA.

The protein resides in the cell membrane. Its function is as follows. The phosphoenolpyruvate-dependent sugar phosphotransferase system (PTS), a major carbohydrate active -transport system, catalyzes the phosphorylation of incoming sugar substrates concomitant with their translocation across the cell membrane. This system is involved in fructose transport. The protein is Fructose permease IID component (levG) of Bacillus subtilis (strain 168).